The primary structure comprises 261 residues: Prostate-specific antigen (261 aa).

An N-terminal signal peptide occupies residues 1-17 (MWVPVVFLTLSVTWIGA). A propeptide spans 18-24 (APLILSR) (activation peptide). The Peptidase S1 domain maps to 25–258 (IVGGWECEKH…YRKWIKDTIV (234 aa)). 5 disulfide bridges follow: Cys31–Cys173, Cys50–Cys66, Cys152–Cys219, Cys184–Cys198, and Cys209–Cys234. His65 serves as the catalytic Charge relay system. N-linked (GlcNAc...) asparagine glycosylation is present at Asn69. Asp120 acts as the Charge relay system in catalysis. The Charge relay system role is filled by Ser213.

This sequence belongs to the peptidase S1 family. Kallikrein subfamily. As to quaternary structure, forms a heterodimer with SERPINA5.

It localises to the secreted. It carries out the reaction Preferential cleavage: -Tyr-|-Xaa-.. Its activity is regulated as follows. Inhibited by SERPINA5. Activity is strongly inhibited by Zn2+, 100 times more abundant in semen than in serum. This inhibition is relieved by exposure to semenogelins, which are avid zinc binders. In terms of biological role, hydrolyzes semenogelin-1 thus leading to the liquefaction of the seminal coagulum. The polypeptide is Prostate-specific antigen (KLK3) (Homo sapiens (Human)).